The primary structure comprises 84 residues: Large ribosomal subunit protein bL27 (84 aa).

Residues 1–29 form a disordered region; that stretch reads MAHKKGGGSTKNGRDSNPKYLGIKASGGS.

The protein belongs to the bacterial ribosomal protein bL27 family.

The chain is Large ribosomal subunit protein bL27 from Chlorobium phaeobacteroides (strain BS1).